The following is a 417-amino-acid chain: Valine--pyruvate aminotransferase (417 aa).

Lysine 249 is subject to N6-(pyridoxal phosphate)lysine.

It belongs to the class-I pyridoxal-phosphate-dependent aminotransferase family. Homodimer. It depends on pyridoxal 5'-phosphate as a cofactor.

It is found in the cytoplasm. The catalysed reaction is L-valine + pyruvate = 3-methyl-2-oxobutanoate + L-alanine. In terms of biological role, involved in the biosynthesis of alanine. The sequence is that of Valine--pyruvate aminotransferase (avtA) from Escherichia coli (strain K12).